Reading from the N-terminus, the 184-residue chain is ADP-ribosylation factor-like protein 2 (184 aa).

Gly-2 carries N-myristoyl glycine lipidation. Residues 23–30, 66–70, and 125–128 contribute to the GTP site; these read GLDNAGKT, DVGGQ, and NKQD.

The protein belongs to the small GTPase superfamily. Arf family. Ubiquitously expressed.

Its function is as follows. GTP-binding protein involved in protein trafficking; may modulate vesicle budding and uncoating within the Golgi apparatus. In Drosophila melanogaster (Fruit fly), this protein is ADP-ribosylation factor-like protein 2 (Arl2).